Consider the following 554-residue polypeptide: Hydroxylamine reductase (554 aa).

Residues cysteine 3, cysteine 6, cysteine 18, and cysteine 25 each coordinate [2Fe-2S] cluster. Residues histidine 252, glutamate 276, cysteine 320, cysteine 408, cysteine 436, cysteine 461, glutamate 495, and lysine 497 each coordinate hybrid [4Fe-2O-2S] cluster. Position 408 is a cysteine persulfide (cysteine 408).

Belongs to the HCP family. [2Fe-2S] cluster is required as a cofactor. The cofactor is hybrid [4Fe-2O-2S] cluster.

Its subcellular location is the cytoplasm. It catalyses the reaction A + NH4(+) + H2O = hydroxylamine + AH2 + H(+). In terms of biological role, catalyzes the reduction of hydroxylamine to form NH(3) and H(2)O. The protein is Hydroxylamine reductase of Shewanella baltica (strain OS223).